The chain runs to 161 residues: Sec-independent protein translocase protein TatB (161 aa).

A helical membrane pass occupies residues 2-22 (FNDIGALELVTLVVLAVLVFG). The disordered stretch occupies residues 102-161 (DAVHGRDAESSSSGSSSGSSSAASGNGRVDMSKKPEKPEKPGKTDKPAADDRPPFDMDAT). The span at 111–126 (SSSSGSSSGSSSAASG) shows a compositional bias: low complexity. Basic and acidic residues predominate over residues 131–161 (DMSKKPEKPEKPGKTDKPAADDRPPFDMDAT).

Belongs to the TatB family. As to quaternary structure, the Tat system comprises two distinct complexes: a TatABC complex, containing multiple copies of TatA, TatB and TatC subunits, and a separate TatA complex, containing only TatA subunits. Substrates initially bind to the TatABC complex, which probably triggers association of the separate TatA complex to form the active translocon.

It is found in the cell membrane. Its function is as follows. Part of the twin-arginine translocation (Tat) system that transports large folded proteins containing a characteristic twin-arginine motif in their signal peptide across membranes. Together with TatC, TatB is part of a receptor directly interacting with Tat signal peptides. TatB may form an oligomeric binding site that transiently accommodates folded Tat precursor proteins before their translocation. In Streptomyces coelicolor (strain ATCC BAA-471 / A3(2) / M145), this protein is Sec-independent protein translocase protein TatB.